The following is a 141-amino-acid chain: Auxin-responsive protein SAUR61 (141 aa).

Belongs to the ARG7 family.

The protein resides in the cell membrane. In terms of biological role, may promote auxin-stimulated organ elongation, such as hypocotyls, stamen filaments and petals. The polypeptide is Auxin-responsive protein SAUR61 (Arabidopsis thaliana (Mouse-ear cress)).